The following is a 361-amino-acid chain: S-adenosylmethionine:tRNA ribosyltransferase-isomerase (361 aa).

It belongs to the QueA family. As to quaternary structure, monomer.

The protein localises to the cytoplasm. It carries out the reaction 7-aminomethyl-7-carbaguanosine(34) in tRNA + S-adenosyl-L-methionine = epoxyqueuosine(34) in tRNA + adenine + L-methionine + 2 H(+). It functions in the pathway tRNA modification; tRNA-queuosine biosynthesis. Its function is as follows. Transfers and isomerizes the ribose moiety from AdoMet to the 7-aminomethyl group of 7-deazaguanine (preQ1-tRNA) to give epoxyqueuosine (oQ-tRNA). In Mesorhizobium japonicum (strain LMG 29417 / CECT 9101 / MAFF 303099) (Mesorhizobium loti (strain MAFF 303099)), this protein is S-adenosylmethionine:tRNA ribosyltransferase-isomerase.